The chain runs to 361 residues: Phosphate acyltransferase (361 aa).

The interval 340–361 is disordered; the sequence is VPADGAATEQGPTPRRIAPPRT.

The protein belongs to the PlsX family. In terms of assembly, homodimer. Probably interacts with PlsY.

The protein resides in the cytoplasm. It carries out the reaction a fatty acyl-[ACP] + phosphate = an acyl phosphate + holo-[ACP]. It functions in the pathway lipid metabolism; phospholipid metabolism. In terms of biological role, catalyzes the reversible formation of acyl-phosphate (acyl-PO(4)) from acyl-[acyl-carrier-protein] (acyl-ACP). This enzyme utilizes acyl-ACP as fatty acyl donor, but not acyl-CoA. The polypeptide is Phosphate acyltransferase (Anaeromyxobacter dehalogenans (strain 2CP-1 / ATCC BAA-258)).